The following is a 182-amino-acid chain: Small ribosomal subunit protein uS5 (182 aa).

Positions 16–79 constitute an S5 DRBM domain; the sequence is FVDRLVHINR…EAAKRGMIYV (64 aa).

It belongs to the universal ribosomal protein uS5 family. In terms of assembly, part of the 30S ribosomal subunit. Contacts proteins S4 and S8.

Its function is as follows. With S4 and S12 plays an important role in translational accuracy. Functionally, located at the back of the 30S subunit body where it stabilizes the conformation of the head with respect to the body. The protein is Small ribosomal subunit protein uS5 of Bartonella quintana (strain Toulouse) (Rochalimaea quintana).